Consider the following 327-residue polypeptide: Cytochrome c oxidase subunit 2 (327 aa).

A signal peptide spans 1–23 (MEQIPASIWTLTAGVVVTLISFW). The next 2 helical transmembrane spans lie at 56 to 78 (LFLV…AGEE) and 96 to 114 (AIPA…DIFQ). Histidine 221, cysteine 255, cysteine 259, and histidine 263 together coordinate Cu cation.

It belongs to the cytochrome c oxidase subunit 2 family. Cu cation is required as a cofactor.

It is found in the cell membrane. It catalyses the reaction 4 Fe(II)-[cytochrome c] + O2 + 8 H(+)(in) = 4 Fe(III)-[cytochrome c] + 2 H2O + 4 H(+)(out). Its function is as follows. Subunits I and II form the functional core of the enzyme complex. Electrons originating in cytochrome c are transferred via heme a and Cu(A) to the binuclear center formed by heme a3 and Cu(B). The polypeptide is Cytochrome c oxidase subunit 2 (ctaC) (Thermostichus vulcanus (Synechococcus vulcanus)).